The following is a 446-amino-acid chain: Tubulin beta-1 chain (446 aa).

GTP is bound by residues Q11, E69, S138, G142, T143, G144, N204, and N226. E69 is a Mg(2+) binding site.

Belongs to the tubulin family. In terms of assembly, dimer of alpha and beta chains. A typical microtubule is a hollow water-filled tube with an outer diameter of 25 nm and an inner diameter of 15 nM. Alpha-beta heterodimers associate head-to-tail to form protofilaments running lengthwise along the microtubule wall with the beta-tubulin subunit facing the microtubule plus end conferring a structural polarity. Microtubules usually have 13 protofilaments but different protofilament numbers can be found in some organisms and specialized cells. Requires Mg(2+) as cofactor.

It localises to the cytoplasm. The protein localises to the cytoskeleton. Its function is as follows. Tubulin is the major constituent of microtubules, a cylinder consisting of laterally associated linear protofilaments composed of alpha- and beta-tubulin heterodimers. Microtubules grow by the addition of GTP-tubulin dimers to the microtubule end, where a stabilizing cap forms. Below the cap, tubulin dimers are in GDP-bound state, owing to GTPase activity of alpha-tubulin. The sequence is that of Tubulin beta-1 chain (TUBB1) from Suillus bovinus (Jersey cow bolete).